Consider the following 377-residue polypeptide: MLARFLSSLLKASVTALAVVVAFGFAANFARAERLKNLATFQGVRDNPLVGYGLVVGLDNTGDQTMQTPFTTQSLTNMLSQLGITLPAGKNMQLKNVAAVMVTATLPAFAQPGSQLDIVVSSMGNAKSLRGGTLLMTPLKGADGQVYAIAQGNMLVGGAGASANGSKVQVNQLAVGRIANGAIVERAVAAFQPDGGVLNLELKDTDFGTAERVVEAINRSMGGGVAAALDGRVVQVRAPQSPSARVGFLARIENLDVTPAKAAAKVILNARTGSIVMNQAVTVEDCAVAHGNLSVVINTQPVISQPAPFSGGQTVVAPVSQIDMKQQGGSLQIVKAGASLAAVVKGLNALGATPADLQTILEAMRAAGALRAELEII.

Residues 1–30 (MLARFLSSLLKASVTALAVVVAFGFAANFA) form the signal peptide.

Belongs to the FlgI family. As to quaternary structure, the basal body constitutes a major portion of the flagellar organelle and consists of four rings (L,P,S, and M) mounted on a central rod.

The protein localises to the periplasm. The protein resides in the bacterial flagellum basal body. Assembles around the rod to form the L-ring and probably protects the motor/basal body from shearing forces during rotation. The polypeptide is Flagellar P-ring protein (Cupriavidus pinatubonensis (strain JMP 134 / LMG 1197) (Cupriavidus necator (strain JMP 134))).